A 503-amino-acid polypeptide reads, in one-letter code: Aspartyl/glutamyl-tRNA(Asn/Gln) amidotransferase subunit B (503 aa).

It belongs to the GatB/GatE family. GatB subfamily. As to quaternary structure, heterotrimer of A, B and C subunits.

The catalysed reaction is L-glutamyl-tRNA(Gln) + L-glutamine + ATP + H2O = L-glutaminyl-tRNA(Gln) + L-glutamate + ADP + phosphate + H(+). The enzyme catalyses L-aspartyl-tRNA(Asn) + L-glutamine + ATP + H2O = L-asparaginyl-tRNA(Asn) + L-glutamate + ADP + phosphate + 2 H(+). Functionally, allows the formation of correctly charged Asn-tRNA(Asn) or Gln-tRNA(Gln) through the transamidation of misacylated Asp-tRNA(Asn) or Glu-tRNA(Gln) in organisms which lack either or both of asparaginyl-tRNA or glutaminyl-tRNA synthetases. The reaction takes place in the presence of glutamine and ATP through an activated phospho-Asp-tRNA(Asn) or phospho-Glu-tRNA(Gln). The sequence is that of Aspartyl/glutamyl-tRNA(Asn/Gln) amidotransferase subunit B from Cereibacter sphaeroides (strain ATCC 17029 / ATH 2.4.9) (Rhodobacter sphaeroides).